The primary structure comprises 449 residues: MRECISIHVGQAGVQIGNACWELYCLEHGIQPDGQMPSDKTIGGGDDSFNTFFSETGAGKHVPRAVFVDLEPTVIDEVRTGTYRQLFHPEQLITGKEDAANNYARGHYTIGKEIIDLVLDRIRKLADQCTGLQGFLVFHSFGGGTGSGFTSLLMERLSVDYGKKSKLEFAIYPAPQVSTAVVEPYNSILTTHTTLEHSDCAFMVDNEAIYDICRRNLDIERPTYTNLNRLISQIVSSITASLRFDGALNVDLTEFQTNLVPYPRIHFPLATYAPVISAEKAYHEQLTVADITNACFEPANQMVKCDPRHGKYMACCLLYRGDVVPKDVNAAIATIKTKRSIQFVDWCPTGFKVGINYQPPTVVPGGDLAKVQRAVCMLSNTTAIAEAWARLDHKFDLMYAKRAFVHWYVGEGMEEGEFSEAREDMAALEKDYEEVGADSADAEDEGEEY.

The MREC motif motif lies at 1 to 4 (MREC). Glutamine 11 provides a ligand contact to GTP. Lysine 40 bears the N6-acetyllysine mark. GTP contacts are provided by glutamate 71, serine 140, glycine 144, threonine 145, threonine 179, asparagine 206, and asparagine 228. Residue glutamate 71 coordinates Mg(2+). Glutamate 254 is an active-site residue. The segment at 430–449 (KDYEEVGADSADAEDEGEEY) is disordered. Residues 431 to 449 (DYEEVGADSADAEDEGEEY) are compositionally biased toward acidic residues.

The protein belongs to the tubulin family. Dimer of alpha and beta chains. A typical microtubule is a hollow water-filled tube with an outer diameter of 25 nm and an inner diameter of 15 nM. Alpha-beta heterodimers associate head-to-tail to form protofilaments running lengthwise along the microtubule wall with the beta-tubulin subunit facing the microtubule plus end conferring a structural polarity. Microtubules usually have 13 protofilaments but different protofilament numbers can be found in some organisms and specialized cells. The cofactor is Mg(2+). Post-translationally, some glutamate residues at the C-terminus are polyglycylated, resulting in polyglycine chains on the gamma-carboxyl group. Glycylation is mainly limited to tubulin incorporated into axonemes (cilia and flagella) whereas glutamylation is prevalent in neuronal cells, centrioles, axonemes, and the mitotic spindle. Both modifications can coexist on the same protein on adjacent residues, and lowering polyglycylation levels increases polyglutamylation, and reciprocally. The precise function of polyglycylation is still unclear. In terms of processing, some glutamate residues at the C-terminus are polyglutamylated, resulting in polyglutamate chains on the gamma-carboxyl group. Polyglutamylation plays a key role in microtubule severing by spastin (SPAST). SPAST preferentially recognizes and acts on microtubules decorated with short polyglutamate tails: severing activity by SPAST increases as the number of glutamates per tubulin rises from one to eight, but decreases beyond this glutamylation threshold. Acetylation of alpha chains at Lys-40 is located inside the microtubule lumen. This modification has been correlated with increased microtubule stability, intracellular transport and ciliary assembly. Post-translationally, undergoes a tyrosination/detyrosination cycle, the cyclic removal and re-addition of a C-terminal tyrosine residue by the enzymes tubulin tyrosine carboxypeptidase (MATCAP1, VASH1 or VASH2) and tubulin tyrosine ligase (TTL), respectively. In terms of processing, tyrosination promotes microtubule interaction with CAP-Gly microtubule plus-end tracking proteins. Tyrosinated tubulins regulate the initiation of dynein-driven motility. Detyrosination is involved in metaphase plate congression by guiding chromosomes during mitosis. Detyrosination increases microtubules-dependent mechanotransduction in dystrophic cardiac and skeletal muscle. In cardiomyocytes, detyrosinated microtubules are required to resist to contractile compression during contraction.

Its subcellular location is the cytoplasm. It is found in the cytoskeleton. It catalyses the reaction GTP + H2O = GDP + phosphate + H(+). Tubulin is the major constituent of microtubules, a cylinder consisting of laterally associated linear protofilaments composed of alpha- and beta-tubulin heterodimers. Microtubules grow by the addition of GTP-tubulin dimers to the microtubule end, where a stabilizing cap forms. Below the cap, tubulin dimers are in GDP-bound state, owing to GTPase activity of alpha-tubulin. In Xenopus laevis (African clawed frog), this protein is Tubulin alpha chain (tuba).